A 239-amino-acid chain; its full sequence is Ribosomal RNA small subunit methyltransferase G (239 aa).

S-adenosyl-L-methionine-binding positions include glycine 79, phenylalanine 84, alanine 130 to glutamate 131, and arginine 149.

This sequence belongs to the methyltransferase superfamily. RNA methyltransferase RsmG family.

The protein localises to the cytoplasm. In terms of biological role, specifically methylates the N7 position of a guanine in 16S rRNA. The sequence is that of Ribosomal RNA small subunit methyltransferase G from Lactobacillus delbrueckii subsp. bulgaricus (strain ATCC 11842 / DSM 20081 / BCRC 10696 / JCM 1002 / NBRC 13953 / NCIMB 11778 / NCTC 12712 / WDCM 00102 / Lb 14).